A 533-amino-acid chain; its full sequence is Probable lipid II flippase MurJ (533 aa).

Transmembrane regions (helical) follow at residues 25–45 (ETLM…YAAF), 90–110 (VLFS…PLLV), 131–151 (LAAV…MSGM), 158–178 (FFAA…ALFY), 192–212 (YLSW…YIGV), 233–253 (LLLL…NLVI), 274–294 (IYQL…LPEL), 316–336 (FVLF…DDII), 350–370 (TTLV…FVLI), 389–409 (YTAI…PVLA), 412–432 (GIAL…FVTL), 449–469 (AMLL…SHRW), and 484–504 (GVLG…AFLI).

It belongs to the MurJ/MviN family.

The protein localises to the cell inner membrane. It functions in the pathway cell wall biogenesis; peptidoglycan biosynthesis. Involved in peptidoglycan biosynthesis. Transports lipid-linked peptidoglycan precursors from the inner to the outer leaflet of the cytoplasmic membrane. This chain is Probable lipid II flippase MurJ, found in Rhizobium tropici.